We begin with the raw amino-acid sequence, 76 residues long: Small ribosomal subunit protein uS17 (76 aa).

Belongs to the universal ribosomal protein uS17 family. In terms of assembly, part of the 30S ribosomal subunit.

Its function is as follows. One of the primary rRNA binding proteins, it binds specifically to the 5'-end of 16S ribosomal RNA. This is Small ribosomal subunit protein uS17 from Ruegeria pomeroyi (strain ATCC 700808 / DSM 15171 / DSS-3) (Silicibacter pomeroyi).